Here is a 90-residue protein sequence, read N- to C-terminus: U7-theraphotoxin-Hhn1a 1 (90 aa).

The signal sequence occupies residues Met1–Ser19. Residues Phe20–Glu50 constitute a propeptide that is removed on maturation. 3 cysteine pairs are disulfide-bonded: Cys51–Cys65, Cys58–Cys70, and Cys64–Cys81.

This sequence belongs to the neurotoxin 10 (Hwtx-1) family. 13 (Hntx-13) subfamily. As to expression, expressed by the venom gland.

The protein resides in the secreted. Its function is as follows. Ion channel inhibitor. The protein is U7-theraphotoxin-Hhn1a 1 of Cyriopagopus hainanus (Chinese bird spider).